A 203-amino-acid polypeptide reads, in one-letter code: Secreted RxLR effector protein RXLR-C28 (203 aa).

A signal peptide spans methionine 1–serine 24. A glycan (N-linked (GlcNAc...) asparagine) is linked at asparagine 32. The RxLR motif lies at arginine 37–arginine 40. An N-linked (GlcNAc...) asparagine glycan is attached at asparagine 193.

This sequence belongs to the RxLR effector family.

The protein localises to the secreted. The protein resides in the host cytoplasm. In terms of biological role, secreted effector that does not suppress pattern-triggered immunity (PTI) in plant host. The protein is Secreted RxLR effector protein RXLR-C28 of Plasmopara halstedii (Downy mildew of sunflower).